Here is an 86-residue protein sequence, read N- to C-terminus: UPF0457 protein BCE33L2265 (86 aa).

The protein belongs to the UPF0457 family.

This is UPF0457 protein BCE33L2265 from Bacillus cereus (strain ZK / E33L).